A 432-amino-acid polypeptide reads, in one-letter code: Probable exopolygalacturonase X (432 aa).

An N-terminal signal peptide occupies residues 1 to 23; sequence MKFSYSFVQVVSLLLSLSPSVEG. N-linked (GlcNAc...) asparagine glycosylation is found at N113, N129, and N199. The PbH1 1 repeat unit spans residues 231–252; the sequence is SDNIVIQNSVINNGDDCVSFKP. Catalysis depends on D245, which acts as the Proton donor. A disulfide bridge connects residues C247 and C264. N-linked (GlcNAc...) asparagine glycans are attached at residues N253 and N265. PbH1 repeat units lie at residues 254–274, 285–306, and 327–348; these read STNI…SVGS, VQNV…RIKV, and VKNI…EVTQ. H268 is a catalytic residue. N-linked (GlcNAc...) asparagine glycosylation is found at N292, N297, N329, N354, and N364. A PbH1 5 repeat occupies 362 to 394; it reads PSNLTISDIHFKNFRGTTSGKRDPDVGTIVCSS. The cysteines at positions 392 and 398 are disulfide-linked.

It belongs to the glycosyl hydrolase 28 family.

The protein localises to the secreted. The catalysed reaction is [(1-&gt;4)-alpha-D-galacturonosyl](n) + H2O = alpha-D-galacturonate + [(1-&gt;4)-alpha-D-galacturonosyl](n-1). Specific in hydrolyzing the terminal glycosidic bond of polygalacturonic acid and oligogalacturonates. This Neosartorya fischeri (strain ATCC 1020 / DSM 3700 / CBS 544.65 / FGSC A1164 / JCM 1740 / NRRL 181 / WB 181) (Aspergillus fischerianus) protein is Probable exopolygalacturonase X (pgaX).